A 748-amino-acid chain; its full sequence is Pentatricopeptide repeat-containing protein At3g13880 (748 aa).

17 PPR repeats span residues 46 to 80 (DSEGYKILFQTAAKSGSVVLGKLAHGHMIKSSLNP), 81 to 111 (CLYLLNNLLNMYCKCRELGFARQLFDRMPER), 112 to 146 (NIISFNSLISGYTQMGFYEQAMELFLEAREANLKL), 147 to 181 (DKFTYAGALGFCGERCDLDLGELLHGLVVVNGLSQ), 182 to 212 (QVFLINVLIDMYSKCGKLDQAMSLFDRCDER), 213 to 247 (DQVSWNSLISGYVRVGAAEEPLNLLAKMHRDGLNL), 248 to 285 (TTYALGSVLKACCINLNEGFIEKGMAIHCYTAKLGMEF), 286 to 316 (DIVVRTALLDMYAKNGSLKEAIKLFSLMPSK), 317 to 356 (NVVTYNAMISGFLQMDEITDEASSEAFKLFMDMQRRGLEP), 357 to 391 (SPSTFSVVLKACSAAKTLEYGRQIHALICKNNFQS), 392 to 422 (DEFIGSALIELYALMGSTEDGMQCFASTSKQ), 423 to 457 (DIASWTSMIDCHVQNEQLESAFDLFRQLFSSHIRP), 458 to 492 (EEYTVSLMMSACADFAALSSGEQIQGYAIKSGIDA), 493 to 523 (FTSVKTSSISMYAKSGNMPLANQVFIEVQNP), 524 to 558 (DVATYSAMISSLAQHGSANEALNIFESMKTHGIKP), 559 to 589 (NQQAFLGVLIACCHGGLVTQGLKYFQCMKND), and 595 to 629 (NEKHFTCLVDLLGRTGRLSDAENLILSSGFQDHPV). The interval 630 to 705 (TWRALLSSCR…EPALSWIVIG (76 aa)) is type E motif. Residues 706 to 736 (NQTHSFAVADLSHPSSQMIYTMLETMDNVDF) form a type E(+) motif region.

It belongs to the PPR family. PCMP-E subfamily.

The sequence is that of Pentatricopeptide repeat-containing protein At3g13880 (PCMP-E89) from Arabidopsis thaliana (Mouse-ear cress).